Reading from the N-terminus, the 736-residue chain is Microtubule-associated protein mu-2 (736 aa).

It belongs to the orthoreovirus mu-2 protein family. As to quaternary structure, interacts with protein mu-NS; in viral inclusions. Interacts with polymerase lambda-3; this interaction stimulates the ATPase activity of mu-2. The cofactor is a divalent metal cation.

It is found in the virion. It localises to the host cytoplasm. The protein localises to the host cytoskeleton. In terms of biological role, minor inner capsid (core) component. Displays NTPase and RNA 5'-triphosphatase (RTPase) activities. ATP is the preferred substrate for hydrolysis. May function as a cofactor of polymerase lambda-3. Associates with microtubules and plays a role in the formation, structural organization and morphology of viral inclusions, where the assembly of cores and the replication of viral RNA occur. Together with mu-NS, recruits the other core proteins to these inclusions. The chain is Microtubule-associated protein mu-2 (M1) from Mammalia (T2J).